Consider the following 428-residue polypeptide: uncharacterized protein (428 aa).

His-68 contacts Zn(2+). Glu-71 (proton acceptor) is an active-site residue. The Zn(2+) site is built by His-72 and Glu-143.

Belongs to the peptidase M16 family. Zn(2+) is required as a cofactor.

This is an uncharacterized protein from Bacillus subtilis (strain 168).